Here is a 528-residue protein sequence, read N- to C-terminus: Protein HPH2 (528 aa).

Low complexity predominate over residues 1 to 13 (MQNAQIKSSSKGS). Disordered regions lie at residues 1–52 (MQNA…STVE), 170–193 (AQQH…PSRS), 230–257 (ILPN…STQT), and 270–334 (ESSP…QSVA). Over residues 17–36 (GTDRNSKDGVEKRPLEDVKQ) the composition is skewed to basic and acidic residues. Composition is skewed to low complexity over residues 283–296 (PSVA…VANP) and 308–332 (SFSQ…FSQS). The chain crosses the membrane as a helical span at residues 505-521 (ALDIVFLIIIIVICYTF).

In terms of assembly, interacts with HPH1/FRT1. Post-translationally, phosphorylated by CDC28.

The protein localises to the endoplasmic reticulum membrane. Required for growth under high NaCl, alkaline pH and cell wall stress. The polypeptide is Protein HPH2 (FRT2) (Saccharomyces cerevisiae (strain ATCC 204508 / S288c) (Baker's yeast)).